The following is a 515-amino-acid chain: Gamma aminobutyrate transaminase 1, mitochondrial (515 aa).

The N-terminal 57 residues, 1 to 57 (MAKISRLFGSTVKAAITAQAGFHGKRIPAVSSLQEHIVKSTPARYNSTQACLENDIS), are a transit peptide targeting the mitochondrion. 172-173 (GS) provides a ligand contact to pyridoxal 5'-phosphate. Tyr-205 provides a ligand contact to substrate. Asp-312 is a binding site for pyridoxal 5'-phosphate. Position 341 (Lys-341) interacts with substrate. N6-(pyridoxal phosphate)lysine is present on Lys-341.

This sequence belongs to the class-III pyridoxal-phosphate-dependent aminotransferase family. In terms of tissue distribution, expressed in leaves, roots, stems, flowers and fruits.

The protein resides in the mitochondrion. The catalysed reaction is 4-aminobutanoate + pyruvate = succinate semialdehyde + L-alanine. It carries out the reaction 4-aminobutanoate + glyoxylate = succinate semialdehyde + glycine. Its function is as follows. Transaminase that degrades gamma-amino butyric acid (GABA) and uses pyruvate or glyoxylate as amino-group acceptor. Cannot use beta-alanine, ornithine, acetylornithine, serine, glycine, asparagine, glutamine, glutamate, valine, leucine, isoleucine, methionine, phenylalanine, histidine, lysine, arginine, aspartate, threonine, tyrosine, tryptophan, proline, or cysteine as amino donors. Acts predominantly in vegetative tissues. The chain is Gamma aminobutyrate transaminase 1, mitochondrial (GABA-TP1) from Solanum lycopersicum (Tomato).